Reading from the N-terminus, the 137-residue chain is Type 3 secretion system pilotin (137 aa).

Residues 1–14 (MLLPLALLLGGCVS) form the signal peptide.

It belongs to the ExsB/YscW family.

It is found in the cell outer membrane. Involved in the synthesis of the type III secretion system (T3SS), also called injectisome, which is used to inject bacterial effector proteins into eukaryotic host cells. Pilot protein that is required for the proper localization of the secretin PscC in the outer membrane. Necessary for full in vivo virulence. The protein is Type 3 secretion system pilotin of Pseudomonas aeruginosa (strain ATCC 15692 / DSM 22644 / CIP 104116 / JCM 14847 / LMG 12228 / 1C / PRS 101 / PAO1).